A 379-amino-acid chain; its full sequence is Botryococcene C-methyltransferase (379 aa).

Residues 17-37 (LLTWKGAAGLAAAVALGYIII) form a helical membrane-spanning segment.

The protein belongs to the class I-like SAM-binding methyltransferase superfamily. Erg6/SMT family.

It localises to the microsome membrane. The enzyme catalyses C30 botryococcene + 2 S-adenosyl-L-methionine = 3,20-dimethyl-1,2,21,22-tetradehydro-2,3,20,21-tetrahydrobotryococcene + 2 S-adenosyl-L-homocysteine + 2 H(+). Functionally, converts botryococcene to mono- and dimethyl derivatives, but not to tri- and tetramethylated products. Unable to methylate cycloartenol, zymosterol or lanosterol, but can also use squalene as substrate. Methylates both C-3 and C22 positions, but only C-3 position in monomethylated squalenes. In contrast, monomethylated botryococcene occured mainly at the C-20 position yielding showacene, but also at the C-3 position yielding isoshowacene. The sequence is that of Botryococcene C-methyltransferase (TMT-3) from Botryococcus braunii (Green alga).